A 149-amino-acid chain; its full sequence is SsrA-binding protein (149 aa).

Positions 123 to 149 are disordered; it reads KQFDKRETEKQRDWQREKARIMKGGKE.

It belongs to the SmpB family.

It is found in the cytoplasm. In terms of biological role, required for rescue of stalled ribosomes mediated by trans-translation. Binds to transfer-messenger RNA (tmRNA), required for stable association of tmRNA with ribosomes. tmRNA and SmpB together mimic tRNA shape, replacing the anticodon stem-loop with SmpB. tmRNA is encoded by the ssrA gene; the 2 termini fold to resemble tRNA(Ala) and it encodes a 'tag peptide', a short internal open reading frame. During trans-translation Ala-aminoacylated tmRNA acts like a tRNA, entering the A-site of stalled ribosomes, displacing the stalled mRNA. The ribosome then switches to translate the ORF on the tmRNA; the nascent peptide is terminated with the 'tag peptide' encoded by the tmRNA and targeted for degradation. The ribosome is freed to recommence translation, which seems to be the essential function of trans-translation. The protein is SsrA-binding protein of Cupriavidus taiwanensis (strain DSM 17343 / BCRC 17206 / CCUG 44338 / CIP 107171 / LMG 19424 / R1) (Ralstonia taiwanensis (strain LMG 19424)).